Reading from the N-terminus, the 310-residue chain is Membrane protein insertase YidC 2 (310 aa).

Residues Met-1–Gly-23 form the signal peptide. Cys-24 is lipidated: N-palmitoyl cysteine. Cys-24 carries S-diacylglycerol cysteine lipidation. 5 helical membrane passes run Gly-34–Ala-54, Leu-57–Leu-77, Phe-136–Ile-156, Ile-180–Val-200, and Val-220–Phe-240. The disordered stretch occupies residues Glu-263 to Gln-310. The span at Ala-276 to Leu-290 shows a compositional bias: basic and acidic residues. The span at Ile-291–Gln-310 shows a compositional bias: basic residues.

This sequence belongs to the OXA1/ALB3/YidC family. Type 2 subfamily.

It is found in the cell membrane. Its function is as follows. Required for the insertion and/or proper folding and/or complex formation of integral membrane proteins into the membrane. Involved in integration of membrane proteins that insert both dependently and independently of the Sec translocase complex, as well as at least some lipoproteins. Partially complements an E.coli yidC depletion experiment. The chain is Membrane protein insertase YidC 2 (yidC2) from Streptococcus mutans serotype c (strain ATCC 700610 / UA159).